We begin with the raw amino-acid sequence, 339 residues long: UDP-N-acetylglucosamine--N-acetylmuramyl-(pentapeptide) pyrophosphoryl-undecaprenol N-acetylglucosamine transferase (339 aa).

UDP-N-acetyl-alpha-D-glucosamine-binding positions include 11–13 (TGG), Asn-127, Arg-170, Ser-188, Ile-235, and Gln-280.

This sequence belongs to the glycosyltransferase 28 family. MurG subfamily.

It localises to the cell inner membrane. It catalyses the reaction di-trans,octa-cis-undecaprenyl diphospho-N-acetyl-alpha-D-muramoyl-L-alanyl-D-glutamyl-meso-2,6-diaminopimeloyl-D-alanyl-D-alanine + UDP-N-acetyl-alpha-D-glucosamine = di-trans,octa-cis-undecaprenyl diphospho-[N-acetyl-alpha-D-glucosaminyl-(1-&gt;4)]-N-acetyl-alpha-D-muramoyl-L-alanyl-D-glutamyl-meso-2,6-diaminopimeloyl-D-alanyl-D-alanine + UDP + H(+). It functions in the pathway cell wall biogenesis; peptidoglycan biosynthesis. Functionally, cell wall formation. Catalyzes the transfer of a GlcNAc subunit on undecaprenyl-pyrophosphoryl-MurNAc-pentapeptide (lipid intermediate I) to form undecaprenyl-pyrophosphoryl-MurNAc-(pentapeptide)GlcNAc (lipid intermediate II). In Thermotoga neapolitana (strain ATCC 49049 / DSM 4359 / NBRC 107923 / NS-E), this protein is UDP-N-acetylglucosamine--N-acetylmuramyl-(pentapeptide) pyrophosphoryl-undecaprenol N-acetylglucosamine transferase.